Reading from the N-terminus, the 413-residue chain is Gamma-glutamyl phosphate reductase (413 aa).

Belongs to the gamma-glutamyl phosphate reductase family.

The protein localises to the cytoplasm. It catalyses the reaction L-glutamate 5-semialdehyde + phosphate + NADP(+) = L-glutamyl 5-phosphate + NADPH + H(+). The protein operates within amino-acid biosynthesis; L-proline biosynthesis; L-glutamate 5-semialdehyde from L-glutamate: step 2/2. Its function is as follows. Catalyzes the NADPH-dependent reduction of L-glutamate 5-phosphate into L-glutamate 5-semialdehyde and phosphate. The product spontaneously undergoes cyclization to form 1-pyrroline-5-carboxylate. In Leuconostoc mesenteroides subsp. mesenteroides (strain ATCC 8293 / DSM 20343 / BCRC 11652 / CCM 1803 / JCM 6124 / NCDO 523 / NBRC 100496 / NCIMB 8023 / NCTC 12954 / NRRL B-1118 / 37Y), this protein is Gamma-glutamyl phosphate reductase.